Consider the following 208-residue polypeptide: MNVQHKLVLASGSPRRIELLGQAGIEPDRIHPADIDETPQRAEHPRSLARRLSRDKARKAHEQLQGEAGFSGALVLAADTVVAVGRRILPKAEIEDEARECLRLLSGRTHKVFTGVCLVLPNGNLRQTLVETRLRFERLSRLQINAYLSSGEWRGKAGGYAIQGLAGSFVVKLVGSYTNVVGLPLQETVGLLADGGYPVYANWGTGKV.

Residues 28–48 (DRIHPADIDETPQRAEHPRSL) are disordered. D79 functions as the Proton acceptor in the catalytic mechanism.

This sequence belongs to the Maf family. YhdE subfamily. It depends on a divalent metal cation as a cofactor.

Its subcellular location is the cytoplasm. It carries out the reaction dTTP + H2O = dTMP + diphosphate + H(+). It catalyses the reaction UTP + H2O = UMP + diphosphate + H(+). Nucleoside triphosphate pyrophosphatase that hydrolyzes dTTP and UTP. May have a dual role in cell division arrest and in preventing the incorporation of modified nucleotides into cellular nucleic acids. This is dTTP/UTP pyrophosphatase from Brucella abortus (strain 2308).